The following is a 366-amino-acid chain: MYKIGIILGTRPEIIKMSPVIRELTTKKFFLIHTNQHYSENMDKIFFEELNLKKPDYNLNIGSGSHGDQTGRMLMEIEKVLLKEKPDFVLVQGDTNTVLAGALAASKLGIKIGHIEAGLRSFDRKMPEETNRVLTDHISEFLFAPTKTAANNILKEGISDEKIHIVGNTIVDATIQNLKIAEKNEKVCKFISKITKNEKYFLLTLHRAENTDNFEILSKLVTSINNISKKYEKNIIFPIHPRTHKKLNEFGLINKLENNHLIKIIEPVGYLEFLGLEKNAELIITDSGGLQEEACILNVPCVTLRENTERPETLDVNSNILAGSDPENILNCVEKMLKSNRHWNNPFGDGNSGKIIVNIVFGEKKP.

Histidine 206 is an active-site residue.

This sequence belongs to the UDP-N-acetylglucosamine 2-epimerase family. In terms of assembly, homodimer.

It is found in the cytoplasm. The enzyme catalyses UDP-N-acetyl-alpha-D-glucosamine = UDP-N-acetyl-alpha-D-mannosamine. In terms of biological role, catalyzes the reversible epimerization at C-2 of UDP-N-acetylglucosamine (UDP-GlcNAc) to produce UDP-N-acetylmannosamine (UDP-ManNAc), the activated donor of ManNAc residues. The protein is UDP-N-acetylglucosamine 2-epimerase (wecB) of Methanococcus maripaludis (strain DSM 14266 / JCM 13030 / NBRC 101832 / S2 / LL).